The following is a 153-amino-acid chain: Aspartate carbamoyltransferase regulatory chain (153 aa).

Residues Cys-109, Cys-114, Cys-138, and Cys-141 each coordinate Zn(2+).

The protein belongs to the PyrI family. In terms of assembly, contains catalytic and regulatory chains. Zn(2+) serves as cofactor.

In terms of biological role, involved in allosteric regulation of aspartate carbamoyltransferase. The chain is Aspartate carbamoyltransferase regulatory chain from Vibrio vulnificus (strain CMCP6).